A 407-amino-acid polypeptide reads, in one-letter code: Lysosome-associated membrane glycoprotein 1 (407 aa).

Positions 1 to 21 (MAAPGAPRSLLLLLLAGLAHG) are cleaved as a signal peptide. Residues 22 to 189 (ASALFVVKDS…SKEETRCTQD (168 aa)) form a first lumenal domain region. Topologically, residues 22–371 (ASALFVVKDS…VEECMQDGNN (350 aa)) are lumenal. 12 N-linked (GlcNAc...) asparagine glycosylation sites follow: asparagine 32, asparagine 40, asparagine 57, asparagine 72, asparagine 79, asparagine 98, asparagine 102, asparagine 116, asparagine 125, asparagine 145, asparagine 160, and asparagine 178. An intrachain disulfide couples cysteine 36 to cysteine 75. A disulfide bond links cysteine 150 and cysteine 186. The tract at residues 183 to 206 (ETRCTQDGPSPTTVPPSPSPPLVP) is disordered. The segment at 190 to 219 (GPSPTTVPPSPSPPLVPTNPTVIKYNVTGE) is hinge. Pro residues predominate over residues 194 to 206 (TTVPPSPSPPLVP). N-linked (GlcNAc...) asparagine glycans are attached at residues asparagine 215, asparagine 220, asparagine 233, asparagine 241, asparagine 253, asparagine 283, asparagine 297, asparagine 304, and asparagine 312. Residues 220 to 371 (NGTCLLASMA…VEECMQDGNN (152 aa)) form a second lumenal domain region. Cysteine 223 and cysteine 260 are disulfide-bonded. An intrachain disulfide couples cysteine 328 to cysteine 365. A helical membrane pass occupies residues 372-395 (MLIPIAVGGALAGLVLIVLIAYLI). Residues 396–407 (GRKRSHAGYQTI) are Cytoplasmic-facing.

It belongs to the LAMP family. In terms of assembly, interacts with ABCB9; this interaction strongly stabilizes ABCB9 and protects ABCB9 against lysosomal degradation. Interacts with FURIN. Interacts with TMEM175; inhibiting the proton channel activity of TMEM175. In terms of processing, O- and N-glycosylated; some of the N-glycans attached to LAMP-1 are polylactosaminoglycans.

It localises to the lysosome membrane. Its subcellular location is the endosome membrane. The protein resides in the late endosome membrane. It is found in the cell membrane. The protein localises to the cytolytic granule membrane. Lysosomal membrane glycoprotein which plays an important role in lysosome biogenesis, lysosomal pH regulation, autophagy and cholesterol homeostasis. Acts as an important regulator of lysosomal lumen pH regulation by acting as a direct inhibitor of the proton channel TMEM175, facilitating lysosomal acidification for optimal hydrolase activity. Also plays an important role in NK-cells cytotoxicity. Mechanistically, participates in cytotoxic granule movement to the cell surface and perforin trafficking to the lytic granule. In addition, protects NK-cells from degranulation-associated damage induced by their own cytotoxic granule content. Presents carbohydrate ligands to selectins. The sequence is that of Lysosome-associated membrane glycoprotein 1 (LAMP1) from Cricetulus griseus (Chinese hamster).